Here is a 758-residue protein sequence, read N- to C-terminus: 5-methyltetrahydropteroyltriglutamate--homocysteine methyltransferase (758 aa).

5-methyltetrahydropteroyltri-L-glutamate contacts are provided by residues 17 to 20 (RELK) and Lys117. L-homocysteine contacts are provided by residues 434–436 (IGS) and Glu487. Residues 434-436 (IGS) and Glu487 each bind L-methionine. 5-methyltetrahydropteroyltri-L-glutamate-binding positions include 518-519 (RC) and Trp564. Asp602 is an L-homocysteine binding site. An L-methionine-binding site is contributed by Asp602. A 5-methyltetrahydropteroyltri-L-glutamate-binding site is contributed by Glu608. Zn(2+) is bound by residues His644, Cys646, and Glu668. The Proton donor role is filled by His697. Zn(2+) is bound at residue Cys729.

It belongs to the vitamin-B12 independent methionine synthase family. Requires Zn(2+) as cofactor.

The catalysed reaction is 5-methyltetrahydropteroyltri-L-glutamate + L-homocysteine = tetrahydropteroyltri-L-glutamate + L-methionine. It participates in amino-acid biosynthesis; L-methionine biosynthesis via de novo pathway; L-methionine from L-homocysteine (MetE route): step 1/1. Its function is as follows. Catalyzes the transfer of a methyl group from 5-methyltetrahydrofolate to homocysteine resulting in methionine formation. This Sodalis glossinidius (strain morsitans) protein is 5-methyltetrahydropteroyltriglutamate--homocysteine methyltransferase.